A 516-amino-acid chain; its full sequence is GMP synthase [glutamine-hydrolyzing] (516 aa).

Residues 5–199 (PIVILDFGSQ…ARKICGITSK (195 aa)) form the Glutamine amidotransferase type-1 domain. Cys82 serves as the catalytic Nucleophile. Residues His173 and Glu175 contribute to the active site. The 192-residue stretch at 200-391 (WDMGHFAKEQ…LGLPREMVYR (192 aa)) folds into the GMPS ATP-PPase domain. 227-233 (SGGVDSS) serves as a coordination point for ATP.

As to quaternary structure, homodimer.

It carries out the reaction XMP + L-glutamine + ATP + H2O = GMP + L-glutamate + AMP + diphosphate + 2 H(+). Its pathway is purine metabolism; GMP biosynthesis; GMP from XMP (L-Gln route): step 1/1. Its function is as follows. Catalyzes the synthesis of GMP from XMP. This is GMP synthase [glutamine-hydrolyzing] from Nitratiruptor sp. (strain SB155-2).